Consider the following 129-residue polypeptide: MSEVAETWVDTWMAKLVNYDYKHFIRLVIIVGGYLLLRNIASRELAKKQLAAQVEKDKRDKEEKRSKDLIDKPDDAATAETTSFGWGKKTRRRVKRQQELFENALEEAKRRNQGLDPDSDADIEELLEE.

Position 2 is an N-acetylserine (Ser-2). Residues 23-42 (HFIRLVIIVGGYLLLRNIAS) form a helical membrane-spanning segment. The stretch at 43–116 (RELAKKQLAA…EAKRRNQGLD (74 aa)) forms a coiled coil. 2 disordered regions span residues 53 to 92 (QVEK…KTRR) and 106 to 129 (EEAK…LLEE). The segment covering 54-75 (VEKDKRDKEEKRSKDLIDKPDD) has biased composition (basic and acidic residues). Over residues 117–129 (PDSDADIEELLEE) the composition is skewed to acidic residues. Position 119 is a phosphoserine (Ser-119).

It belongs to the PGA2 family.

The protein resides in the endoplasmic reticulum membrane. It localises to the nucleus membrane. Functionally, involved in the processing and trafficking of GAS1 and PHO8 glycosylated proteins. The protein is Processing of GAS1 and ALP protein 2 (PGA2) of Saccharomyces cerevisiae (strain ATCC 204508 / S288c) (Baker's yeast).